Here is a 361-residue protein sequence, read N- to C-terminus: Phosphoserine aminotransferase (361 aa).

Arginine 42 is an L-glutamate binding site. Residues alanine 76–arginine 77, tryptophan 102, threonine 153, aspartate 173, and glutamine 196 contribute to the pyridoxal 5'-phosphate site. Lysine 197 is modified (N6-(pyridoxal phosphate)lysine). Asparagine 238–threonine 239 is a pyridoxal 5'-phosphate binding site.

It belongs to the class-V pyridoxal-phosphate-dependent aminotransferase family. SerC subfamily. In terms of assembly, homodimer. The cofactor is pyridoxal 5'-phosphate.

Its subcellular location is the cytoplasm. It catalyses the reaction O-phospho-L-serine + 2-oxoglutarate = 3-phosphooxypyruvate + L-glutamate. The enzyme catalyses 4-(phosphooxy)-L-threonine + 2-oxoglutarate = (R)-3-hydroxy-2-oxo-4-phosphooxybutanoate + L-glutamate. The protein operates within amino-acid biosynthesis; L-serine biosynthesis; L-serine from 3-phospho-D-glycerate: step 2/3. It functions in the pathway cofactor biosynthesis; pyridoxine 5'-phosphate biosynthesis; pyridoxine 5'-phosphate from D-erythrose 4-phosphate: step 3/5. Its function is as follows. Catalyzes the reversible conversion of 3-phosphohydroxypyruvate to phosphoserine and of 3-hydroxy-2-oxo-4-phosphonooxybutanoate to phosphohydroxythreonine. This is Phosphoserine aminotransferase from Mannheimia succiniciproducens (strain KCTC 0769BP / MBEL55E).